Here is a 194-residue protein sequence, read N- to C-terminus: Putative manganese efflux pump MntP (194 aa).

Transmembrane regions (helical) follow at residues 3-23 (PITI…AAIG), 37-57 (LYVA…GWLL), 65-85 (IAAF…IHMI), 112-132 (LAAT…SLAF), 137-157 (IGIV…FGVM), and 170-190 (AEIV…YEHL).

This sequence belongs to the MntP (TC 9.B.29) family.

The protein localises to the cell inner membrane. Its function is as follows. Probably functions as a manganese efflux pump. The protein is Putative manganese efflux pump MntP of Xylella fastidiosa (strain M12).